Here is a 324-residue protein sequence, read N- to C-terminus: Glutaminase 2 (324 aa).

Positions 75, 127, 171, 178, 202, 254, and 272 each coordinate substrate.

This sequence belongs to the glutaminase family. As to quaternary structure, homotetramer.

The catalysed reaction is L-glutamine + H2O = L-glutamate + NH4(+). This is Glutaminase 2 from Halalkalibacterium halodurans (strain ATCC BAA-125 / DSM 18197 / FERM 7344 / JCM 9153 / C-125) (Bacillus halodurans).